The sequence spans 551 residues: Probable 4-coumarate--CoA ligase 3 (551 aa).

Residues serine 205, serine 206, glycine 207, threonine 208, threonine 209, and lysine 213 each coordinate ATP. (E)-4-coumaroyl-AMP is bound at residue phenylalanine 253. CoA is bound at residue lysine 274. Positions 276–346 (EPVRFLELIK…RFKGRLVIKQ (71 aa)) are SBD1. Alanine 323, glutamine 346, glycine 347, and threonine 351 together coordinate (E)-4-coumaroyl-AMP. ATP contacts are provided by glutamine 346, glycine 347, threonine 351, aspartate 430, and arginine 445. Residues 347-409 (GYGATELSPC…IKGPNVMLGY (63 aa)) are SBD2. 2 residues coordinate (E)-4-coumaroyl-AMP: lysine 447 and lysine 451. Residues lysine 453 and glycine 454 each contribute to the CoA site. Lysine 537 is an ATP binding site.

This sequence belongs to the ATP-dependent AMP-binding enzyme family. Requires Mg(2+) as cofactor.

The catalysed reaction is (E)-4-coumarate + ATP + CoA = (E)-4-coumaroyl-CoA + AMP + diphosphate. It catalyses the reaction (E)-4-coumarate + ATP + H(+) = (E)-4-coumaroyl-AMP + diphosphate. The enzyme catalyses (E)-4-coumaroyl-AMP + CoA = (E)-4-coumaroyl-CoA + AMP + H(+). It participates in phytoalexin biosynthesis; 3,4',5-trihydroxystilbene biosynthesis; 3,4',5-trihydroxystilbene from trans-4-coumarate: step 1/2. Functionally, carboxylate--CoA ligase that may use 4-coumarate as substrate. Follows a two-step reaction mechanism, wherein the carboxylate substrate first undergoes adenylation by ATP, followed by a thioesterification in the presence of CoA to yield the final CoA thioester. This is Probable 4-coumarate--CoA ligase 3 (4cl3) from Dictyostelium discoideum (Social amoeba).